The chain runs to 159 residues: Probable cyclic pyranopterin monophosphate synthase (159 aa).

Residues 75-77 (LCH) and 111-112 (ME) contribute to the substrate site. Residue aspartate 126 is part of the active site.

The protein belongs to the MoaC family. As to quaternary structure, homohexamer; trimer of dimers.

The catalysed reaction is (8S)-3',8-cyclo-7,8-dihydroguanosine 5'-triphosphate = cyclic pyranopterin phosphate + diphosphate. It functions in the pathway cofactor biosynthesis; molybdopterin biosynthesis. Functionally, catalyzes the conversion of (8S)-3',8-cyclo-7,8-dihydroguanosine 5'-triphosphate to cyclic pyranopterin monophosphate (cPMP). This chain is Probable cyclic pyranopterin monophosphate synthase, found in Pyrococcus horikoshii (strain ATCC 700860 / DSM 12428 / JCM 9974 / NBRC 100139 / OT-3).